The primary structure comprises 116 residues: Large ribosomal subunit protein bL17 (116 aa).

It belongs to the bacterial ribosomal protein bL17 family. In terms of assembly, part of the 50S ribosomal subunit. Contacts protein L32.

This chain is Large ribosomal subunit protein bL17, found in Prochlorococcus marinus (strain MIT 9312).